Here is a 255-residue protein sequence, read N- to C-terminus: Ribosomal RNA small subunit methyltransferase A (255 aa).

S-adenosyl-L-methionine contacts are provided by N11, L13, G38, E59, D83, and N101.

The protein belongs to the class I-like SAM-binding methyltransferase superfamily. rRNA adenine N(6)-methyltransferase family. RsmA subfamily.

It is found in the cytoplasm. It carries out the reaction adenosine(1518)/adenosine(1519) in 16S rRNA + 4 S-adenosyl-L-methionine = N(6)-dimethyladenosine(1518)/N(6)-dimethyladenosine(1519) in 16S rRNA + 4 S-adenosyl-L-homocysteine + 4 H(+). Specifically dimethylates two adjacent adenosines (A1518 and A1519) in the loop of a conserved hairpin near the 3'-end of 16S rRNA in the 30S particle. May play a critical role in biogenesis of 30S subunits. The chain is Ribosomal RNA small subunit methyltransferase A from Thiobacillus denitrificans (strain ATCC 25259 / T1).